A 249-amino-acid polypeptide reads, in one-letter code: Derlin-2.1 (249 aa).

Over 1–21 the chain is Cytoplasmic; the sequence is MAQAVEEWYRQMPIITRSYLT. Residues 22 to 42 form a helical membrane-spanning segment; that stretch reads AAVVTTVGCTLEIISPYHLYL. At 43 to 96 the chain is on the lumenal side; the sequence is NPKLVVQHYEIWRLVTNFLYFRKMDLDFLFHMFFLARYCKLLEENSFRGRTADF. A helical transmembrane segment spans residues 97-117; it reads FYMLLFGATVLTSIVLIGGMI. The Cytoplasmic portion of the chain corresponds to 118–122; it reads PYISE. Residues 123–143 form a helical membrane-spanning segment; it reads TFARILFLSNSLTFMMVYVWS. Residues 144 to 152 lie on the Lumenal side of the membrane; that stretch reads KHNPFIHMS. The helical transmembrane segment at 153–173 threads the bilayer; sequence FLGLFTFTAAYLPWVLLGFSI. Topologically, residues 174–249 are cytoplasmic; it reads LVGSSTWVDL…GAMGLDPQAQ (76 aa).

This sequence belongs to the derlin family. As to expression, expressed in roots, stalks, leaves, embryo and endosperm.

It localises to the endoplasmic reticulum membrane. Functionally, may be involved in the degradation process of specific misfolded endoplasmic reticulum (ER) luminal proteins. This Zea mays (Maize) protein is Derlin-2.1 (DER2.1).